We begin with the raw amino-acid sequence, 421 residues long: MEKMHITNQEHDAFVKSHPNGDLLQLTKWAETKKLTGWYARRIAVGRDGEVQGVAQLLFKKVPKLPYTLCYISRGFVVDYSNKEALNALLDSAKEIAKAEKTYAIKIDPDVEVDKGTDALQNLKALGFKHKGFKEGLSKDYIQPRMTMITPIDKNDDELLNSFERRNRSKVRLALKRGTTVERSDREGLKTFAELMKITGERDGFLTRDISYFENIYDALHEDGDAELFLVKLDPKENIAKVNQELNELHAEIAKWQQKMKTSEKQAKKAQNMINDAQNKIAKNEDLKRDLEALEKEHPEGIYLSGALLMFAGSKSYYLYGASSNEFRDFLPNHHMQYTMMKYAREHGATTYDFGGTDNDPDKDSEHYGLWAFKKVWGTYLSEKIGEFDYVLNQPLYQLIEQVKPRLTKAKIKISRKLKRK.

The protein belongs to the FemABX family. As to quaternary structure, monomer.

It localises to the cytoplasm. It catalyses the reaction beta-D-GlcNAc-(1-&gt;4)-Mur2Ac(oyl-L-Ala-D-isoglutaminyl-L-Lys-D-Ala-D-Ala)-di-trans,octa-cis-undecaprenyl diphosphate + glycyl-tRNA(Gly) = beta-D-GlcNAc-(1-&gt;4)-Mur2Ac(oyl-L-Ala-D-isoglutaminyl-L-Lys-(N(6)-Gly)-D-Ala-D-Ala)-di-trans,octa-cis-undecaprenyl diphosphate + tRNA(Gly) + H(+). Functionally, catalyzes the incorporation of the first glycine of the pentaglycine interpeptide bridge, which is characteristic of the S.aureus peptidoglycan. This glycine is added to the epsilon-amino group of the L-lysine of the membrane-bound lipid II intermediate (GlcNAc-(beta-1,4)-N-acetylmuramic acid(-L-Ala-D-iGln-L-Lys-D-Ala-D-Ala)-pyrophosphoryl-undecaprenol), using glycyl-tRNA(Gly) as donor, in a ribosome-independent mechanism. Involved in methicillin resistance. This chain is Lipid II:glycine glycyltransferase (femX), found in Staphylococcus aureus (strain COL).